The chain runs to 215 residues: Cytochrome b6 (215 aa).

A helical transmembrane segment spans residues 32–52; it reads IFYCIGGITFTCFLVQVATGF. Cys-35 lines the heme c pocket. Heme b is bound by residues His-86 and His-100. 3 consecutive transmembrane segments (helical) span residues 90–110, 116–136, and 186–206; these read ASMM…TGGF, LTWV…VTGY, and LHTF…FLMI. Heme b-binding residues include His-187 and His-202.

Belongs to the cytochrome b family. PetB subfamily. The 4 large subunits of the cytochrome b6-f complex are cytochrome b6, subunit IV (17 kDa polypeptide, PetD), cytochrome f and the Rieske protein, while the 4 small subunits are PetG, PetL, PetM and PetN. The complex functions as a dimer. It depends on heme b as a cofactor. Requires heme c as cofactor.

Its subcellular location is the plastid. It is found in the chloroplast thylakoid membrane. Its function is as follows. Component of the cytochrome b6-f complex, which mediates electron transfer between photosystem II (PSII) and photosystem I (PSI), cyclic electron flow around PSI, and state transitions. This chain is Cytochrome b6, found in Chlorella vulgaris (Green alga).